The following is a 168-amino-acid chain: 6,7-dimethyl-8-ribityllumazine synthase (168 aa).

5-amino-6-(D-ribitylamino)uracil contacts are provided by residues Trp-31, Ser-65–Glu-67, and Cys-89–Val-91. Asp-94–Thr-95 contributes to the (2S)-2-hydroxy-3-oxobutyl phosphate binding site. The active-site Proton donor is His-97. Tyr-122 contributes to the 5-amino-6-(D-ribitylamino)uracil binding site. Arg-136 serves as a coordination point for (2S)-2-hydroxy-3-oxobutyl phosphate.

Belongs to the DMRL synthase family.

It carries out the reaction (2S)-2-hydroxy-3-oxobutyl phosphate + 5-amino-6-(D-ribitylamino)uracil = 6,7-dimethyl-8-(1-D-ribityl)lumazine + phosphate + 2 H2O + H(+). Its pathway is cofactor biosynthesis; riboflavin biosynthesis; riboflavin from 2-hydroxy-3-oxobutyl phosphate and 5-amino-6-(D-ribitylamino)uracil: step 1/2. Its function is as follows. Catalyzes the formation of 6,7-dimethyl-8-ribityllumazine by condensation of 5-amino-6-(D-ribitylamino)uracil with 3,4-dihydroxy-2-butanone 4-phosphate. This is the penultimate step in the biosynthesis of riboflavin. This Phocaeicola vulgatus (strain ATCC 8482 / DSM 1447 / JCM 5826 / CCUG 4940 / NBRC 14291 / NCTC 11154) (Bacteroides vulgatus) protein is 6,7-dimethyl-8-ribityllumazine synthase.